The sequence spans 135 residues: uncharacterized protein (135 aa).

2 consecutive transmembrane segments (helical) span residues 20–40 and 47–67; these read IFSF…NTKL and IAYF…IHGT.

It belongs to the plectrovirus ORF5 family.

It localises to the host membrane. This is an uncharacterized protein from Spiroplasma virus SpV1-C74 (SpV1).